We begin with the raw amino-acid sequence, 202 residues long: Protein GrpE 1 (202 aa).

It belongs to the GrpE family. Homodimer.

The protein localises to the cytoplasm. Functionally, participates actively in the response to hyperosmotic and heat shock by preventing the aggregation of stress-denatured proteins, in association with DnaK and GrpE. It is the nucleotide exchange factor for DnaK and may function as a thermosensor. Unfolded proteins bind initially to DnaJ; upon interaction with the DnaJ-bound protein, DnaK hydrolyzes its bound ATP, resulting in the formation of a stable complex. GrpE releases ADP from DnaK; ATP binding to DnaK triggers the release of the substrate protein, thus completing the reaction cycle. Several rounds of ATP-dependent interactions between DnaJ, DnaK and GrpE are required for fully efficient folding. The protein is Protein GrpE 1 of Buchnera aphidicola subsp. Schizaphis graminum (strain Sg).